Here is an 81-residue protein sequence, read N- to C-terminus: MMFPLARNALSSLKIRSILQSMARQSHVKHSPDFHDKYGNAVLASGTAFCVVAWVFTATQIGIEWNLSPVGRVTPKEWKHQ.

Residues 1 to 25 constitute a mitochondrion transit peptide; the sequence is MMFPLARNALSSLKIRSILQSMARQ. Topologically, residues 26-33 are mitochondrial matrix; it reads SHVKHSPD. Residues 34–60 traverse the membrane as a helical segment; that stretch reads FHDKYGNAVLASGTAFCVVAWVFTATQ. Topologically, residues 61-81 are mitochondrial intermembrane; sequence IGIEWNLSPVGRVTPKEWKHQ.

It belongs to the cytochrome c oxidase VIIb family. In terms of assembly, component of the cytochrome c oxidase (complex IV, CIV), a multisubunit enzyme composed of 14 subunits. The complex is composed of a catalytic core of 3 subunits MT-CO1, MT-CO2 and MT-CO3, encoded in the mitochondrial DNA, and 11 supernumerary subunits COX4I, COX5A, COX5B, COX6A, COX6B, COX6C, COX7A, COX7B, COX7C, COX8 and NDUFA4, which are encoded in the nuclear genome. The complex exists as a monomer or a dimer and forms supercomplexes (SCs) in the inner mitochondrial membrane with NADH-ubiquinone oxidoreductase (complex I, CI) and ubiquinol-cytochrome c oxidoreductase (cytochrome b-c1 complex, complex III, CIII), resulting in different assemblies (supercomplex SCI(1)III(2)IV(1) and megacomplex MCI(2)III(2)IV(2)).

It localises to the mitochondrion inner membrane. It functions in the pathway energy metabolism; oxidative phosphorylation. Functionally, component of the cytochrome c oxidase, the last enzyme in the mitochondrial electron transport chain which drives oxidative phosphorylation. The respiratory chain contains 3 multisubunit complexes succinate dehydrogenase (complex II, CII), ubiquinol-cytochrome c oxidoreductase (cytochrome b-c1 complex, complex III, CIII) and cytochrome c oxidase (complex IV, CIV), that cooperate to transfer electrons derived from NADH and succinate to molecular oxygen, creating an electrochemical gradient over the inner membrane that drives transmembrane transport and the ATP synthase. Cytochrome c oxidase is the component of the respiratory chain that catalyzes the reduction of oxygen to water. Electrons originating from reduced cytochrome c in the intermembrane space (IMS) are transferred via the dinuclear copper A center (CU(A)) of subunit 2 and heme A of subunit 1 to the active site in subunit 1, a binuclear center (BNC) formed by heme A3 and copper B (CU(B)). The BNC reduces molecular oxygen to 2 water molecules using 4 electrons from cytochrome c in the IMS and 4 protons from the mitochondrial matrix. The sequence is that of Cytochrome c oxidase subunit 7B2, mitochondrial (COX7B2) from Macaca fascicularis (Crab-eating macaque).